A 344-amino-acid chain; its full sequence is Arginine N-succinyltransferase (344 aa).

Leu125 is a succinyl-CoA binding site. Residue His229 is the Proton donor of the active site.

It belongs to the arginine N-succinyltransferase family.

The catalysed reaction is succinyl-CoA + L-arginine = N(2)-succinyl-L-arginine + CoA + H(+). The protein operates within amino-acid degradation; L-arginine degradation via AST pathway; L-glutamate and succinate from L-arginine: step 1/5. Its function is as follows. Catalyzes the transfer of succinyl-CoA to arginine to produce N(2)-succinylarginine. In Salmonella dublin (strain CT_02021853), this protein is Arginine N-succinyltransferase.